The sequence spans 365 residues: Patr class I histocompatibility antigen, A-2 alpha chain (365 aa).

The N-terminal stretch at 1–24 (MAVMPPRTLLLLLSGALALTQTWA) is a signal peptide. Residues 25 to 114 (GSHSMRYFFT…LRGYYNQSED (90 aa)) are alpha-1. The Extracellular segment spans residues 25–308 (GSHSMRYFFT…EPSSQPTIPI (284 aa)). Residue Asn-110 is glycosylated (N-linked (GlcNAc...) asparagine). An alpha-2 region spans residues 115–206 (GSHTIQIMYG…ENGKETLQRT (92 aa)). 2 disulfides stabilise this stretch: Cys-125-Cys-188 and Cys-227-Cys-283. The interval 207–298 (DPPKTHMTHH…GLPKPLTLRW (92 aa)) is alpha-3. The Ig-like C1-type domain maps to 209–295 (PKTHMTHHPI…QHEGLPKPLT (87 aa)). The segment at 299–308 (EPSSQPTIPI) is connecting peptide. Residues 309–332 (VGIIAGLVLLGAVITGAVVAAVMW) form a helical membrane-spanning segment. Over 333 to 365 (RRKSSDRKGGSYTQAASSDSAQGSDVSLTACKV) the chain is Cytoplasmic. Positions 339-360 (RKGGSYTQAASSDSAQGSDVSL) are disordered. The residue at position 343 (Ser-343) is a Phosphoserine. Tyr-344 carries the post-translational modification Phosphotyrosine. Positions 346–359 (QAASSDSAQGSDVS) are enriched in low complexity. A phosphoserine mark is found at Ser-349, Ser-350, Ser-352, Ser-356, and Ser-359.

The protein belongs to the MHC class I family. As to quaternary structure, heterodimer of an alpha chain and a beta chain (beta-2-microglobulin).

The protein resides in the membrane. Involved in the presentation of foreign antigens to the immune system. This chain is Patr class I histocompatibility antigen, A-2 alpha chain, found in Pan troglodytes (Chimpanzee).